Reading from the N-terminus, the 879-residue chain is Paramyosin, long form (879 aa).

Residues 1–31 (MSSSQAVRSSKYSYRATSTGPGTADVNIEYI) are nonhelical region. Ser18 is subject to Phosphoserine. Residues 32–858 (QDLSSLSRLE…IIRAKHRTFV (827 aa)) adopt a coiled-coil conformation. Residues 859–879 (TTSTVPGSQVYIQETTRTITE) form a nonhelical region region.

Belongs to the paramyosin family. Heterodimer of two isoforms. Post-translationally, the more-acidic and less-abundant isoform is phosphorylated. Expressed in all larval and adult muscle tissues. Expression is five times higher in tubular than in fibrillar muscles.

Its subcellular location is the cytoplasm. It localises to the myofibril. Its function is as follows. Paramyosin is a major structural component of many thick filaments isolated from invertebrate muscles. The protein is Paramyosin, long form (Prm) of Drosophila melanogaster (Fruit fly).